Consider the following 700-residue polypeptide: Serine/threonine-protein kinase WNK1 (700 aa).

The Protein kinase domain maps to 24-281 (GRYNEVLGKG…ARELLDDPFL (258 aa)). ATP-binding positions include 104–107 (TELF) and Lys154. Residue Asp171 is the Proton acceptor of the active site. A compositionally biased stretch (low complexity) spans 314–339 (NYPSNSSSLNRQYSNGNYPSNSSSLN). 3 disordered regions span residues 314–345 (NYPS…YSNG), 551–575 (ESRE…EVLY), and 647–666 (ESGE…SVSG). The span at 551–565 (ESRELSSIDSGHNHS) shows a compositional bias: basic and acidic residues. Positions 566–575 (EEEEEEEVLY) are enriched in acidic residues.

Belongs to the protein kinase superfamily. Ser/Thr protein kinase family. WNK subfamily. In terms of processing, autophosphorylated.

It carries out the reaction L-seryl-[protein] + ATP = O-phospho-L-seryl-[protein] + ADP + H(+). The enzyme catalyses L-threonyl-[protein] + ATP = O-phospho-L-threonyl-[protein] + ADP + H(+). Regulates flowering time by modulating the photoperiod pathway. Phosphorylates APRR3. In Arabidopsis thaliana (Mouse-ear cress), this protein is Serine/threonine-protein kinase WNK1 (WNK1).